Consider the following 687-residue polypeptide: MTTEDPDSNHLSSETGIKLALDPNLITLALSSNPNSSLHSPTSDEPVPESAGKADTSIRLEGDELENKTKKDNDKNLKFLKNKDSLVSNPHEIYGSMPLEQLIPIILRQRGPGFKFVDLNEKELQNEIKQLGSDSSDGHNSEKKDTDGADENVQIGEDFMEVDYEDKDNPVDSRNETDHKTNENGETDDNIETVMTQEQFVKRRRDMLEHINLAMNESSLALEFVSLLLSSVKESTGMSSMSPFLRKVVKPSSLNSDKIPYVAPTKKEYIELDILNKGWKLQSLNESKDLLRASFNKLSSILQNEHDYWNKIMQSISNKDVIFKIRDRTSGQKLLAIKYGYEDSGSTYKHDRGIANIRNNIESQNLDLIPHSSSVFKGTDFVHSVKKFLRVRIFTKIESEDDYILSGESVMDRDSESEEAETKDIRKQIQLLKKIIFEKELMYQIKKECALLISYGVSIENENKVIIELPNEKFEIELLSLDDDSIVNHEQDLPKINDKRANLMLVMLRLLLVVIFKKTLRSRISSPHGLINLNVDDDILIIRPILGKVRFANYKLLLKKIIKDYVLDIVPGSSITETEVEREQPQENKNIDDENITKLNKEIRAFDKLLNIPRRELKINLPLTEHKSPNLSLMLESPNYCNALIHIKFSAGTEANAVSFDTTFSDFKEVEDFLHFIVAEYIQQKKV.

Residues leucine 30 to serine 43 are compositionally biased toward low complexity. Disordered regions lie at residues leucine 30–lysine 70 and glutamine 130–aspartate 189. 3 stretches are compositionally biased toward basic and acidic residues: residues threonine 56–lysine 70, serine 136–aspartate 147, and lysine 167–glutamate 183.

This sequence belongs to the Mediator complex subunit 17 family. As to quaternary structure, component of the Mediator complex, which is composed of at least 21 subunits that form three structurally distinct submodules. The Mediator head module contains MED6, MED8, MED11, SRB4/MED17, SRB5/MED18, ROX3/MED19, SRB2/MED20 and SRB6/MED22, the middle module contains MED1, MED4, NUT1/MED5, MED7, CSE2/MED9, NUT2/MED10, SRB7/MED21 and SOH1/MED31, and the tail module contains MED2, PGD1/MED3, RGR1/MED14, GAL11/MED15 and SIN4/MED16. The head and the middle modules interact directly with RNA polymerase II, whereas the elongated tail module interacts with gene-specific regulatory proteins. The head module may also interact with the TFIIF complex. SRB4/MED17 interacts directly with MED6, MED11, ROX3/MED19, SRB2/MED20 and SRB6/MED22. Interacts directly with the activator GAL4.

The protein resides in the nucleus. Component of the Mediator complex, a coactivator involved in the regulated transcription of nearly all RNA polymerase II-dependent genes. Mediator functions as a bridge to convey information from gene-specific regulatory proteins to the basal RNA polymerase II transcription machinery. The Mediator complex, having a compact conformation in its free form, is recruited to promoters by direct interactions with regulatory proteins and serves for the assembly of a functional preinitiation complex with RNA polymerase II and the general transcription factors. The Mediator complex unfolds to an extended conformation and partially surrounds RNA polymerase II, specifically interacting with the unphosphorylated form of the C-terminal domain (CTD) of RNA polymerase II. The Mediator complex dissociates from the RNA polymerase II holoenzyme and stays at the promoter when transcriptional elongation begins. This chain is Mediator of RNA polymerase II transcription subunit 17 (SRB4), found in Saccharomyces cerevisiae (strain ATCC 204508 / S288c) (Baker's yeast).